Consider the following 369-residue polypeptide: S-adenosylmethionine:tRNA ribosyltransferase-isomerase (369 aa).

Belongs to the QueA family. In terms of assembly, monomer.

It is found in the cytoplasm. The catalysed reaction is 7-aminomethyl-7-carbaguanosine(34) in tRNA + S-adenosyl-L-methionine = epoxyqueuosine(34) in tRNA + adenine + L-methionine + 2 H(+). It functions in the pathway tRNA modification; tRNA-queuosine biosynthesis. In terms of biological role, transfers and isomerizes the ribose moiety from AdoMet to the 7-aminomethyl group of 7-deazaguanine (preQ1-tRNA) to give epoxyqueuosine (oQ-tRNA). This chain is S-adenosylmethionine:tRNA ribosyltransferase-isomerase, found in Acaryochloris marina (strain MBIC 11017).